The following is a 311-amino-acid chain: Maspardin (311 aa).

An AB hydrolase-1 domain is found at 86–159 (EFCDGFRKLL…NSFWLMPSFM (74 aa)).

The protein belongs to the AB hydrolase superfamily.

It localises to the cytoplasm. This is Maspardin (spg21) from Danio rerio (Zebrafish).